Consider the following 37-residue polypeptide: MVEPLLSGIVLGLIPVTLAGLFVTAYLQYRRGDKLNR.

Residues 5–25 (LLSGIVLGLIPVTLAGLFVTA) traverse the membrane as a helical segment.

It belongs to the PetG family. In terms of assembly, the 4 large subunits of the cytochrome b6-f complex are cytochrome b6, subunit IV (17 kDa polypeptide, PetD), cytochrome f and the Rieske protein, while the 4 small subunits are PetG, PetL, PetM and PetN. The complex functions as a dimer.

It localises to the plastid. Its subcellular location is the chloroplast thylakoid membrane. Component of the cytochrome b6-f complex, which mediates electron transfer between photosystem II (PSII) and photosystem I (PSI), cyclic electron flow around PSI, and state transitions. PetG is required for either the stability or assembly of the cytochrome b6-f complex. In Chlorokybus atmophyticus (Soil alga), this protein is Cytochrome b6-f complex subunit 5.